Here is a 76-residue protein sequence, read N- to C-terminus: Omega-conotoxin-like TxO1 (76 aa).

The N-terminal stretch at 1–22 is a signal peptide; that stretch reads MKLTCVVIVAVLFLTVWTFATA. A propeptide spanning residues 23 to 50 is cleaved from the precursor; sequence DDSGNGLEKLFSNAHHEMKNPEASKLNE. Disulfide bonds link cysteine 52-cysteine 67, cysteine 59-cysteine 70, and cysteine 66-cysteine 75.

This sequence belongs to the conotoxin O1 superfamily. As to expression, expressed by the venom duct.

It is found in the secreted. Functionally, omega-conotoxins act at presynaptic membranes, they bind and block voltage-gated calcium channels (Cav). This chain is Omega-conotoxin-like TxO1, found in Conus textile (Cloth-of-gold cone).